The sequence spans 158 residues: Protein Smg homolog (158 aa).

Belongs to the Smg family.

This is Protein Smg homolog from Vibrio cholerae serotype O1 (strain ATCC 39315 / El Tor Inaba N16961).